Reading from the N-terminus, the 114-residue chain is uncharacterized protein (114 aa).

This is an uncharacterized protein from Escherichia coli O6:H1 (strain CFT073 / ATCC 700928 / UPEC).